A 799-amino-acid chain; its full sequence is ATP synthase subunit alpha (799 aa).

The ATP synthase alpha chain stretch occupies residues Met-1–Glu-549. Position 170-177 (Gly-170–Thr-177) interacts with ATP. Residues Thr-550–Lys-799 form a unknown region.

This sequence belongs to the ATPase alpha/beta chains family. In terms of assembly, F-type ATPases have 2 components, CF(1) - the catalytic core - and CF(0) - the membrane proton channel. CF(1) has five subunits: alpha(3), beta(3), gamma(1), delta(1), epsilon(1). CF(0) has three main subunits: a(1), b(2) and c(9-12). The alpha and beta chains form an alternating ring which encloses part of the gamma chain. CF(1) is attached to CF(0) by a central stalk formed by the gamma and epsilon chains, while a peripheral stalk is formed by the delta and b chains.

Its subcellular location is the cell membrane. It catalyses the reaction ATP + H2O + 4 H(+)(in) = ADP + phosphate + 5 H(+)(out). In terms of biological role, produces ATP from ADP in the presence of a proton gradient across the membrane. The alpha chain is a regulatory subunit. In Ureaplasma parvum serovar 3 (strain ATCC 27815 / 27 / NCTC 11736), this protein is ATP synthase subunit alpha (atpA).